We begin with the raw amino-acid sequence, 97 residues long: Large ribosomal subunit protein bL28 (97 aa).

It belongs to the bacterial ribosomal protein bL28 family.

The chain is Large ribosomal subunit protein bL28 from Brucella abortus (strain S19).